Consider the following 388-residue polypeptide: Succinate--CoA ligase [ADP-forming] subunit beta (388 aa).

Residues 9–244 (KEILRKFGVA…LDEEDPAEIE (236 aa)) form the ATP-grasp domain. ATP contacts are provided by residues K46, 53-55 (GRG), E99, A102, and E107. Residues N199 and D213 each contribute to the Mg(2+) site. Substrate is bound by residues N264 and 321-323 (GIM).

Belongs to the succinate/malate CoA ligase beta subunit family. In terms of assembly, heterotetramer of two alpha and two beta subunits. Requires Mg(2+) as cofactor.

It catalyses the reaction succinate + ATP + CoA = succinyl-CoA + ADP + phosphate. The catalysed reaction is GTP + succinate + CoA = succinyl-CoA + GDP + phosphate. It functions in the pathway carbohydrate metabolism; tricarboxylic acid cycle; succinate from succinyl-CoA (ligase route): step 1/1. Functionally, succinyl-CoA synthetase functions in the citric acid cycle (TCA), coupling the hydrolysis of succinyl-CoA to the synthesis of either ATP or GTP and thus represents the only step of substrate-level phosphorylation in the TCA. The beta subunit provides nucleotide specificity of the enzyme and binds the substrate succinate, while the binding sites for coenzyme A and phosphate are found in the alpha subunit. The protein is Succinate--CoA ligase [ADP-forming] subunit beta of Burkholderia mallei (strain NCTC 10247).